An 844-amino-acid chain; its full sequence is Patched-related protein 9 (844 aa).

Residues L264–L421 enclose the SSD domain.

The protein belongs to the patched family.

In Caenorhabditis elegans, this protein is Patched-related protein 9 (ptr-9).